Here is a 225-residue protein sequence, read N- to C-terminus: Ribosomal RNA small subunit methyltransferase G (225 aa).

Residues Gly-71, Leu-76, 121 to 122, and Arg-139 each bind S-adenosyl-L-methionine; that span reads AE. Residues 204-225 are disordered; that stretch reads VVEARRATPSNGRGRPGRSSRR.

The protein belongs to the methyltransferase superfamily. RNA methyltransferase RsmG family.

It is found in the cytoplasm. In terms of biological role, specifically methylates the N7 position of guanine in position 518 of 16S rRNA. This Mycobacterium sp. (strain KMS) protein is Ribosomal RNA small subunit methyltransferase G.